Here is a 434-residue protein sequence, read N- to C-terminus: Enolase (434 aa).

(2R)-2-phosphoglycerate is bound at residue Gln-167. The active-site Proton donor is the Glu-209. The Mg(2+) site is built by Asp-246, Glu-291, and Asp-318. Positions 343, 372, 373, and 394 each coordinate (2R)-2-phosphoglycerate. Residue Lys-343 is the Proton acceptor of the active site.

It belongs to the enolase family. Component of the RNA degradosome, a multiprotein complex involved in RNA processing and mRNA degradation. It depends on Mg(2+) as a cofactor.

It is found in the cytoplasm. Its subcellular location is the secreted. It localises to the cell surface. The catalysed reaction is (2R)-2-phosphoglycerate = phosphoenolpyruvate + H2O. It participates in carbohydrate degradation; glycolysis; pyruvate from D-glyceraldehyde 3-phosphate: step 4/5. Its function is as follows. Catalyzes the reversible conversion of 2-phosphoglycerate (2-PG) into phosphoenolpyruvate (PEP). It is essential for the degradation of carbohydrates via glycolysis. This chain is Enolase, found in Buchnera aphidicola subsp. Acyrthosiphon pisum (strain 5A).